Here is a 98-residue protein sequence, read N- to C-terminus: Small ribosomal subunit protein bS6 (98 aa).

Belongs to the bacterial ribosomal protein bS6 family.

In terms of biological role, binds together with bS18 to 16S ribosomal RNA. The sequence is that of Small ribosomal subunit protein bS6 from Lactobacillus helveticus (strain DPC 4571).